Consider the following 156-residue polypeptide: Myosin regulatory light chain, striated adductor muscle (156 aa).

Alanine 1 bears the Blocked amino end (Ala) mark. EF-hand domains are found at residues 15–50 and 84–119; these read KQIQ…LGRT and DSEE…MGDN. Positions 28, 30, 32, and 39 each coordinate Ca(2+).

Functionally, in molluscan muscle, calcium regulation is associated with myosin rather than with actin. Muscle myosin contains two types of light chains: the catalytic light chain, essential for ATPase activity, and the regulatory light chain, a calcium-binding protein responsible for Ca(2+) dependent binding and Ca(2+) dependent Mg-ATPase activity. The polypeptide is Myosin regulatory light chain, striated adductor muscle (Chlamys nipponensis akazara (Akazara scallop)).